The sequence spans 197 residues: uncharacterized protein (197 aa).

Helical transmembrane passes span 11-31 (IALI…ISAS), 85-105 (STFM…SIFV), 109-129 (AVVV…VVLF), and 174-194 (VGTG…YPFI).

Its subcellular location is the cell membrane. This is an uncharacterized protein from Methanocaldococcus jannaschii (strain ATCC 43067 / DSM 2661 / JAL-1 / JCM 10045 / NBRC 100440) (Methanococcus jannaschii).